The chain runs to 896 residues: Probable sodium/sulfate cotransporter 3 (896 aa).

The next 5 membrane-spanning stretches (helical) occupy residues 1–21, 47–69, 106–126, 140–160, and 186–206; these read MAAIGWPGIVAIISVAISFII, IITVAKAAAGYGNTGLLTVIFLY, VMVLSAFLNNTPCVTFMIPIL, LLIPLSYAAVLGGTCTSIGTS, and MFDIAPYGVPYALMGFVFIIL. RCK C-terminal domains follow at residues 212-296, 319-404, 408-493, and 499-586; these read LPGN…EFGL, TAFH…FKIN, LRFV…FPGL, and EQVD…KAFV. Helical transmembrane passes span 602–622, 626–646, 654–674, 685–705, 734–754, 776–796, and 804–824; these read MAIGVLLVVGMVLTQIVGGLK, YIHLWPAAVLTAALMLLTGCM, AIMWDVYLTIAAAFGVSAALE, AIISIGKSIGGDGPALIAIYV, LKIPAVDISVAIMLGASAGFI, FATIGAPFQIWLMVVASFILC, and VWIATWSITAFIVFVPALLTL. The disordered stretch occupies residues 857–881; it reads RAQSFGGKAMSVGSTESRTDGSSTP. Polar residues predominate over residues 868–881; it reads VGSTESRTDGSSTP.

Belongs to the divalent anion:Na+ symporter (DASS) superfamily. Na+/sulfate symporter (TC 2.A.47.4) family.

It localises to the cell membrane. Na(+)/sulfate cotransporter with a probable low-affinity for sulfate. The sequence is that of Probable sodium/sulfate cotransporter 3 (SLT3) from Chlamydomonas reinhardtii (Chlamydomonas smithii).